Here is a 337-residue protein sequence, read N- to C-terminus: Putative 4-hydroxythreonine-4-phosphate dehydrogenase 2 (337 aa).

Residues H173, H217, and H274 each contribute to the a divalent metal cation site.

It belongs to the PdxA family. As to quaternary structure, homodimer. It depends on Zn(2+) as a cofactor. Mg(2+) is required as a cofactor. Requires Co(2+) as cofactor.

The protein localises to the cytoplasm. The catalysed reaction is 4-(phosphooxy)-L-threonine + NAD(+) = 3-amino-2-oxopropyl phosphate + CO2 + NADH. The protein operates within cofactor biosynthesis; pyridoxine 5'-phosphate biosynthesis; pyridoxine 5'-phosphate from D-erythrose 4-phosphate: step 4/5. Functionally, catalyzes the NAD(P)-dependent oxidation of 4-(phosphooxy)-L-threonine (HTP) into 2-amino-3-oxo-4-(phosphooxy)butyric acid which spontaneously decarboxylates to form 3-amino-2-oxopropyl phosphate (AHAP). This chain is Putative 4-hydroxythreonine-4-phosphate dehydrogenase 2, found in Pseudomonas aeruginosa (strain ATCC 15692 / DSM 22644 / CIP 104116 / JCM 14847 / LMG 12228 / 1C / PRS 101 / PAO1).